The chain runs to 125 residues: Small ribosomal subunit protein uS13 (125 aa).

A disordered region spans residues 97–125 (PVRGQKTRSNARTRKGPRPSRIKTKKKSS). Over residues 101–125 (QKTRSNARTRKGPRPSRIKTKKKSS) the composition is skewed to basic residues.

Belongs to the universal ribosomal protein uS13 family. In terms of assembly, part of the 30S ribosomal subunit. Forms a loose heterodimer with protein S19. Forms two bridges to the 50S subunit in the 70S ribosome.

Functionally, located at the top of the head of the 30S subunit, it contacts several helices of the 16S rRNA. In the 70S ribosome it contacts the 23S rRNA (bridge B1a) and protein L5 of the 50S subunit (bridge B1b), connecting the 2 subunits; these bridges are implicated in subunit movement. Contacts the tRNAs in the A and P-sites. This Thermotoga neapolitana (strain ATCC 49049 / DSM 4359 / NBRC 107923 / NS-E) protein is Small ribosomal subunit protein uS13.